The following is a 1578-amino-acid chain: Pentafunctional AROM polypeptide (1578 aa).

The interval 1-393 (MSVELAKVSI…YGTSAHVVSD (393 aa)) is 3-dehydroquinate synthase. Residues 44–46 (DTN), 79–82 (EAHK), 110–112 (GGV), and Asp-115 contribute to the NAD(+) site. Residue Arg-126 coordinates 7-phospho-2-dehydro-3-deoxy-D-arabino-heptonate. 135–136 (TS) is a binding site for NAD(+). Residues Asp-142 and Lys-148 each contribute to the 7-phospho-2-dehydro-3-deoxy-D-arabino-heptonate site. Lys-157 is a binding site for NAD(+). Position 158 (Asn-158) interacts with 7-phospho-2-dehydro-3-deoxy-D-arabino-heptonate. NAD(+) contacts are provided by residues 175–178 (WLET) and Asn-186. Position 190 (Glu-190) interacts with Zn(2+). 7-phospho-2-dehydro-3-deoxy-D-arabino-heptonate is bound by residues 190-193 (EVIK) and Lys-259. Glu-269 serves as the catalytic Proton acceptor; for 3-dehydroquinate synthase activity. 7-phospho-2-dehydro-3-deoxy-D-arabino-heptonate-binding positions include 273 to 277 (RNLLN) and His-280. His-280 contributes to the Zn(2+) binding site. His-284 functions as the Proton acceptor; for 3-dehydroquinate synthase activity in the catalytic mechanism. Residues His-296 and Lys-365 each contribute to the 7-phospho-2-dehydro-3-deoxy-D-arabino-heptonate site. His-296 is a Zn(2+) binding site. The EPSP synthase stretch occupies residues 406–863 (VHPFNNIPEG…WDVLHSQLGA (458 aa)). The active-site For EPSP synthase activity is Cys-845. The interval 882–1071 (VVIIGMRAAG…VPSRRSAFVC (190 aa)) is shikimate kinase. 886–893 (GMRAAGKS) lines the ATP pocket. The tract at residues 1072–1284 (LTFEDLSDHL…AAPGQLTLAE (213 aa)) is 3-dehydroquinase. His-1189 (proton acceptor; for 3-dehydroquinate dehydratase activity) is an active-site residue. The active-site Schiff-base intermediate with substrate; for 3-dehydroquinate dehydratase activity is the Lys-1218. Positions 1297–1578 (AKKFFVIGSP…KAIFDAVTQE (282 aa)) are shikimate dehydrogenase.

In the N-terminal section; belongs to the sugar phosphate cyclases superfamily. Dehydroquinate synthase family. The protein in the 2nd section; belongs to the EPSP synthase family. It in the 3rd section; belongs to the shikimate kinase family. This sequence in the 4th section; belongs to the type-I 3-dehydroquinase family. In the C-terminal section; belongs to the shikimate dehydrogenase family. Homodimer. It depends on Zn(2+) as a cofactor.

Its subcellular location is the cytoplasm. It catalyses the reaction 7-phospho-2-dehydro-3-deoxy-D-arabino-heptonate = 3-dehydroquinate + phosphate. The enzyme catalyses 3-dehydroquinate = 3-dehydroshikimate + H2O. It carries out the reaction shikimate + NADP(+) = 3-dehydroshikimate + NADPH + H(+). The catalysed reaction is shikimate + ATP = 3-phosphoshikimate + ADP + H(+). It catalyses the reaction 3-phosphoshikimate + phosphoenolpyruvate = 5-O-(1-carboxyvinyl)-3-phosphoshikimate + phosphate. It participates in metabolic intermediate biosynthesis; chorismate biosynthesis; chorismate from D-erythrose 4-phosphate and phosphoenolpyruvate: step 2/7. Its pathway is metabolic intermediate biosynthesis; chorismate biosynthesis; chorismate from D-erythrose 4-phosphate and phosphoenolpyruvate: step 3/7. The protein operates within metabolic intermediate biosynthesis; chorismate biosynthesis; chorismate from D-erythrose 4-phosphate and phosphoenolpyruvate: step 4/7. It functions in the pathway metabolic intermediate biosynthesis; chorismate biosynthesis; chorismate from D-erythrose 4-phosphate and phosphoenolpyruvate: step 5/7. It participates in metabolic intermediate biosynthesis; chorismate biosynthesis; chorismate from D-erythrose 4-phosphate and phosphoenolpyruvate: step 6/7. The AROM polypeptide catalyzes 5 consecutive enzymatic reactions in prechorismate polyaromatic amino acid biosynthesis. The protein is Pentafunctional AROM polypeptide of Kluyveromyces lactis (strain ATCC 8585 / CBS 2359 / DSM 70799 / NBRC 1267 / NRRL Y-1140 / WM37) (Yeast).